We begin with the raw amino-acid sequence, 316 residues long: 4-hydroxy-3-methylbut-2-enyl diphosphate reductase (316 aa).

Cys-12 contacts [4Fe-4S] cluster. (2E)-4-hydroxy-3-methylbut-2-enyl diphosphate contacts are provided by His-41 and His-74. His-41 and His-74 together coordinate dimethylallyl diphosphate. Residues His-41 and His-74 each coordinate isopentenyl diphosphate. Position 96 (Cys-96) interacts with [4Fe-4S] cluster. His-124 is a binding site for (2E)-4-hydroxy-3-methylbut-2-enyl diphosphate. Residue His-124 coordinates dimethylallyl diphosphate. His-124 provides a ligand contact to isopentenyl diphosphate. Glu-126 (proton donor) is an active-site residue. Thr-168 is a binding site for (2E)-4-hydroxy-3-methylbut-2-enyl diphosphate. Cys-198 lines the [4Fe-4S] cluster pocket. (2E)-4-hydroxy-3-methylbut-2-enyl diphosphate contacts are provided by Ser-226, Ser-227, Asn-228, and Ser-270. Positions 226, 227, 228, and 270 each coordinate dimethylallyl diphosphate. Isopentenyl diphosphate is bound by residues Ser-226, Ser-227, Asn-228, and Ser-270.

The protein belongs to the IspH family. [4Fe-4S] cluster serves as cofactor.

It catalyses the reaction isopentenyl diphosphate + 2 oxidized [2Fe-2S]-[ferredoxin] + H2O = (2E)-4-hydroxy-3-methylbut-2-enyl diphosphate + 2 reduced [2Fe-2S]-[ferredoxin] + 2 H(+). The catalysed reaction is dimethylallyl diphosphate + 2 oxidized [2Fe-2S]-[ferredoxin] + H2O = (2E)-4-hydroxy-3-methylbut-2-enyl diphosphate + 2 reduced [2Fe-2S]-[ferredoxin] + 2 H(+). It functions in the pathway isoprenoid biosynthesis; dimethylallyl diphosphate biosynthesis; dimethylallyl diphosphate from (2E)-4-hydroxy-3-methylbutenyl diphosphate: step 1/1. It participates in isoprenoid biosynthesis; isopentenyl diphosphate biosynthesis via DXP pathway; isopentenyl diphosphate from 1-deoxy-D-xylulose 5-phosphate: step 6/6. Its function is as follows. Catalyzes the conversion of 1-hydroxy-2-methyl-2-(E)-butenyl 4-diphosphate (HMBPP) into a mixture of isopentenyl diphosphate (IPP) and dimethylallyl diphosphate (DMAPP). Acts in the terminal step of the DOXP/MEP pathway for isoprenoid precursor biosynthesis. This is 4-hydroxy-3-methylbut-2-enyl diphosphate reductase from Marinobacter nauticus (strain ATCC 700491 / DSM 11845 / VT8) (Marinobacter aquaeolei).